Consider the following 161-residue polypeptide: Allophycocyanin alpha chain (161 aa).

Asn-71 carries the post-translational modification N4-methylasparagine. Cys-81 is a (2R,3E)-phycocyanobilin binding site.

It belongs to the phycobiliprotein family. As to quaternary structure, heterodimer of an alpha and a beta chain. Contains one covalently linked phycocyanobilin chromophore.

It localises to the plastid. The protein localises to the chloroplast thylakoid membrane. Light-harvesting photosynthetic bile pigment-protein from the phycobiliprotein complex. Allophycocyanin has a maximum absorption at approximately 650 nanometers. In Cyanidium caldarium (Red alga), this protein is Allophycocyanin alpha chain (apcA).